The following is a 565-amino-acid chain: MPTKTSTPSSQSPKLSHLRPQYIPNHIPDSSYVRILDTTLRDGEQSPGATMTAKEKLDIARQLVKLGVDIIQPGFPSASNSDFMAVKMIAQEVGNAVDDDGYVPVIAGFCRCVEKDISTAWEAVKYAKRPRLCTSIATSPIHMEHKLRKSKDQVIQIARDMVKFARSLGCNDIQFGAEDATRSDREFLYEILGVVIEAGATTVNIADTVGIVMPLELGKLIVDIKDNTPGIANVIISTHCHNDLGLATANTIEGARTGARQLEVTINGIGERAGNASLEEVVMALASKGDHALNGLYTRINTRHILETSKMVEEYSGMHLQPHKPLVGANAFVHASGIHQDGMLKHKGTYETISPEEIGHKRTTRIGIVLGKLSGSQALRKRLEELGYDLKEDEVDSVFWQFKAMAEKKKVVTDVDLKALVSYKAFHAESIWKLGDLQVTCGTIGLSTATVKLVNIDGSTHVACSIGIGAVDSTYKAINLIVKEPTKLLDYSLNSVTEGIGVNVTARVVICRENNHTSTYAFTEDANYPTFSGIAAEMDVVVSTVKAYLVALNKLLRWKESFRCA.

Over residues 1–15 (MPTKTSTPSSQSPKL) the composition is skewed to low complexity. Residues 1–21 (MPTKTSTPSSQSPKLSHLRPQ) form a disordered region. One can recognise a Pyruvate carboxyltransferase domain in the interval 33–306 (VRILDTTLRD…YTRINTRHIL (274 aa)). A divalent metal cation contacts are provided by aspartate 42, histidine 239, histidine 241, and asparagine 275.

Belongs to the alpha-IPM synthase/homocitrate synthase family. LeuA type 1 subfamily. In terms of assembly, homodimer. The cofactor is a divalent metal cation. In terms of tissue distribution, exclusively expressed in mature nodules.

It carries out the reaction 3-methyl-2-oxobutanoate + acetyl-CoA + H2O = (2S)-2-isopropylmalate + CoA + H(+). Its function is as follows. Catalyzes the condensation of the acetyl group of acetyl-CoA with 3-methyl-2-oxobutanoate (2-oxoisovalerate) to form 3-carboxy-3-hydroxy-4-methylpentanoate (2-isopropylmalate). May play an important role in symbiotic nitrogen fixation. The polypeptide is Probable 2-isopropylmalate synthase (GMN56) (Glycine max (Soybean)).